Consider the following 266-residue polypeptide: Apolipoprotein A-I (266 aa).

Positions 1–18 (MKAVVLTLAVLFLTGSQA) are cleaved as a signal peptide. A run of 2 repeats spans residues 67-88 (LKLLDNWDTLSSTVAKLREQIG) and 89-110 (PVTQEFWDNLEKETEVLRQEMN). The interval 67–266 (LKLLDNWDTL…DEATKKLNAQ (200 aa)) is 10 X approximate tandem repeats. The residue at position 109 (methionine 109) is a Methionine sulfoxide. One copy of the 3; half-length repeat lies at 111–121 (KDLEEVKKKVQ). 5 repeat units span residues 122–143 (PYLDEFQSKWHEEVELYRQKVA), 144–165 (PLGAELSEGARQKLQELQEKLS), 166–187 (PLGEELRDRARTHVDALRAQLA), 188–209 (PYSDQLRERLATRLQALKEGGG), and 210–231 (AALAEYHAKASEQLSVLREKAK). The 9; half-length repeat unit spans residues 232–242 (PALEDLRQGLL). Residues 243–266 (PVLESFRTSLLAAVDEATKKLNAQ) form repeat 10.

Belongs to the apolipoprotein A1/A4/E family. In terms of assembly, homodimer. Interacts with APOA1BP and CLU. Component of a sperm activating protein complex (SPAP), consisting of APOA1, an immunoglobulin heavy chain, an immunoglobulin light chain and albumin. Interacts with NDRG1. Interacts with SCGB3A2. Interacts with NAXE and YJEFN3. Glycosylated. Post-translationally, palmitoylated. In terms of processing, phosphorylation sites are present in the extracellular medium.

The protein resides in the secreted. Functionally, participates in the reverse transport of cholesterol from tissues to the liver for excretion by promoting cholesterol efflux from tissues and by acting as a cofactor for the lecithin cholesterol acyltransferase (LCAT). As part of the SPAP complex, activates spermatozoa motility. In Odobenus rosmarus divergens (Pacific walrus), this protein is Apolipoprotein A-I (APOA1).